The sequence spans 270 residues: Phosphatidylglycerol--prolipoprotein diacylglyceryl transferase (270 aa).

A run of 4 helical transmembrane segments spans residues 18 to 38 (IAVHWYGIIIGLGALLGLWLA), 55 to 75 (LVLFAIPIAILCARAYYVIFQ), 89 to 109 (IWNGGLAIHGGLIGAVLTGII), and 115 to 135 (GLSFWKLADIAAPSILLGQAI). Arg-137 contributes to the a 1,2-diacyl-sn-glycero-3-phospho-(1'-sn-glycerol) binding site. Helical transmembrane passes span 177–197 (QPTFLYESLWSFTGVVVLLLL), 205–225 (GELFLIYVIWYSMGRYFIEGL), and 236–256 (LRIAQVISIVLILCAAALIAY).

This sequence belongs to the Lgt family.

It is found in the cell membrane. It carries out the reaction L-cysteinyl-[prolipoprotein] + a 1,2-diacyl-sn-glycero-3-phospho-(1'-sn-glycerol) = an S-1,2-diacyl-sn-glyceryl-L-cysteinyl-[prolipoprotein] + sn-glycerol 1-phosphate + H(+). It participates in protein modification; lipoprotein biosynthesis (diacylglyceryl transfer). Functionally, catalyzes the transfer of the diacylglyceryl group from phosphatidylglycerol to the sulfhydryl group of the N-terminal cysteine of a prolipoprotein, the first step in the formation of mature lipoproteins. In Bacillus licheniformis (strain ATCC 14580 / DSM 13 / JCM 2505 / CCUG 7422 / NBRC 12200 / NCIMB 9375 / NCTC 10341 / NRRL NRS-1264 / Gibson 46), this protein is Phosphatidylglycerol--prolipoprotein diacylglyceryl transferase.